The following is a 51-amino-acid chain: uncharacterized protein (51 aa).

The interval 1–24 (MGGRFSGRVGIEKGGHPPSAADHS) is disordered.

This is an uncharacterized protein from Escherichia coli.